We begin with the raw amino-acid sequence, 287 residues long: Pyridoxal kinase PdxY (287 aa).

Substrate contacts are provided by residues S10 and 45 to 46 (TQ). ATP-binding positions include D112, A144, E149, K182, and 209-212 (RPLV). D224 serves as a coordination point for substrate.

This sequence belongs to the pyridoxine kinase family. PdxY subfamily. As to quaternary structure, homodimer. It depends on Mg(2+) as a cofactor.

The catalysed reaction is pyridoxal + ATP = pyridoxal 5'-phosphate + ADP + H(+). It functions in the pathway cofactor metabolism; pyridoxal 5'-phosphate salvage; pyridoxal 5'-phosphate from pyridoxal: step 1/1. In terms of biological role, pyridoxal kinase involved in the salvage pathway of pyridoxal 5'-phosphate (PLP). Catalyzes the phosphorylation of pyridoxal to PLP. The sequence is that of Pyridoxal kinase PdxY from Escherichia coli (strain UTI89 / UPEC).